The sequence spans 629 residues: (-)-alpha-pinene synthase, chloroplastic (629 aa).

Residues 1-48 constitute a chloroplast transit peptide; the sequence is MSPVSVISLPSDLCLPTSFIDRSGRELIPLHITIPNVAMRRQGKLMTR. Mg(2+) is bound by residues aspartate 380, aspartate 384, and aspartate 532. The short motif at 380 to 384 is the DDXXD motif element; that stretch reads DDMYD. Serine 540 contributes to the K(+) binding site.

This sequence belongs to the terpene synthase family. Tpsd subfamily. It depends on Mg(2+) as a cofactor. Requires Mn(2+) as cofactor. The cofactor is K(+).

It is found in the plastid. The protein resides in the chloroplast. It carries out the reaction (2E)-geranyl diphosphate = (1S,5S)-alpha-pinene + diphosphate. Its pathway is terpene metabolism; oleoresin biosynthesis. Involved in defensive oleoresin formation in conifers in response to insect attack or other injury. Involved in monoterpene (C10) olefins biosynthesis. Produces mainly (-)-alpha-pinene (79%) and lesser amounts of (-)-beta-pinene (4.2%), nearly racemic mixtures of camphene (2.8% (+)/2.2% (-)) and limonene (2.4% (+)/3.7% (-)), as well as small amounts of (+)-alpha-pinene (3.3%) and (+)-beta-pinene (2.4%). The chain is (-)-alpha-pinene synthase, chloroplastic (PT1) from Pinus taeda (Loblolly pine).